We begin with the raw amino-acid sequence, 712 residues long: uncharacterized protein (712 aa).

Disordered regions lie at residues 1-46, 107-264, and 370-389; these read MAKI…NNLN, NIKP…IPQA, and QPQH…QQNQ. Low complexity-rich tracts occupy residues 10-46, 107-143, and 161-173; these read INNS…NNLN, NIKP…SNSS, and TFDN…NSSN. The segment covering 178 to 187 has biased composition (polar residues); the sequence is ISPTTSPQLE. 2 stretches are compositionally biased toward low complexity: residues 188 to 198 and 241 to 264; these read QHQQYQQQQHQ and PLQQ…IPQA.

This is an uncharacterized protein from Dictyostelium discoideum (Social amoeba).